We begin with the raw amino-acid sequence, 534 residues long: EH domain-containing protein 1 (534 aa).

N-acetylmethionine is present on methionine 1. One can recognise a Dynamin-type G domain in the interval 55 to 286; it reads FDNKPMVLLV…DLFKDIQSLP (232 aa). Positions 65–72 are G1 motif; that stretch reads GQYSTGKT. 65–72 is an ATP binding site; the sequence is GQYSTGKT. Residues 91–92 are G2 motif; it reads EP. Positions 153 to 156 are G3 motif; it reads DTPG. A coiled-coil region spans residues 198 to 227; sequence DEFSEVIKALKNHEDKIRVVLNKADQIETQ. Residues 219-222 are G4 motif; the sequence is NKAD. An ATP-binding site is contributed by lysine 220. Position 243 (isoleucine 243) is a region of interest, G5 motif. Tryptophan 258 lines the ATP pocket. Phosphoserine occurs at positions 355 and 456. The EH domain maps to 444–532; sequence DKPTYDEIFY…PHLIPPSKRR (89 aa). Positions 476-511 constitute an EF-hand domain; the sequence is LPNTVLGKIWKLADVDKDGLLDDEEFALANHLIKVK. Ca(2+)-binding residues include aspartate 489, aspartate 491, aspartate 493, and glutamate 500.

It belongs to the TRAFAC class dynamin-like GTPase superfamily. Dynamin/Fzo/YdjA family. EHD subfamily. As to quaternary structure, homooligomer, and heterooligomer with EHD2, EHD3 and EHD4, ATP-binding is required for heterooligomerization. Interacts (via EH domain) with MICALL1 (via NPF1 motif); the interaction is direct and recruits EHD1 to membranes. Interacts with RAB35; the interaction is indirect through MICALL1 and recruits EHD1 to membranes. Interacts (via EH domain) with PACSIN2 (via NPF motifs); regulates localization to tubular recycling endosome membranes. Interacts with PACSIN1. Interacts with RAB8A. Interacts with FER1L5 (via second C2 domain). Interacts with MYOF. Interacts with ZFYVE20. Interacts (via EH domain) with RAB11FIP2.

The protein resides in the recycling endosome membrane. It is found in the early endosome membrane. It localises to the cell membrane. Its subcellular location is the cell projection. The protein localises to the cilium membrane. In terms of biological role, ATP- and membrane-binding protein that controls membrane reorganization/tubulation upon ATP hydrolysis. In vitro causes vesiculation of endocytic membranes. Acts in early endocytic membrane fusion and membrane trafficking of recycling endosomes. Recruited to endosomal membranes upon nerve growth factor stimulation, indirectly regulates neurite outgrowth. Plays a role in myoblast fusion. Involved in the unidirectional retrograde dendritic transport of endocytosed BACE1 and in efficient sorting of BACE1 to axons implicating a function in neuronal APP processing. Plays a role in the formation of the ciliary vesicle (CV), an early step in cilium biogenesis. Proposed to be required for the fusion of distal appendage vesicles (DAVs) to form the CV by recruiting SNARE complex component SNAP29. Is required for recruitment of transition zone proteins CEP290, RPGRIP1L, TMEM67 and B9D2, and of IFT20 following DAV reorganization before Rab8-dependent ciliary membrane extension. Required for the loss of CCP110 form the mother centriole essential for the maturation of the basal body during ciliogenesis. This is EH domain-containing protein 1 from Rattus norvegicus (Rat).